The chain runs to 493 residues: Cysteine--tRNA ligase (493 aa).

Cys-31 contributes to the Zn(2+) binding site. The short motif at 33 to 43 is the 'HIGH' region element; the sequence is PTVYGDAHLGH. Residues Cys-226, His-251, and Glu-255 each contribute to the Zn(2+) site. Positions 283-287 match the 'KMSKS' region motif; it reads KMGKS. Lys-286 contributes to the ATP binding site.

The protein belongs to the class-I aminoacyl-tRNA synthetase family. As to quaternary structure, monomer. Zn(2+) serves as cofactor.

It localises to the cytoplasm. The enzyme catalyses tRNA(Cys) + L-cysteine + ATP = L-cysteinyl-tRNA(Cys) + AMP + diphosphate. This Phocaeicola vulgatus (strain ATCC 8482 / DSM 1447 / JCM 5826 / CCUG 4940 / NBRC 14291 / NCTC 11154) (Bacteroides vulgatus) protein is Cysteine--tRNA ligase.